An 87-amino-acid polypeptide reads, in one-letter code: Large ribosomal subunit protein bL27 (87 aa).

It belongs to the bacterial ribosomal protein bL27 family.

The sequence is that of Large ribosomal subunit protein bL27 from Paenarthrobacter aurescens (strain TC1).